We begin with the raw amino-acid sequence, 427 residues long: Enolase (427 aa).

Residue Q162 participates in (2R)-2-phosphoglycerate binding. E204 acts as the Proton donor in catalysis. Residues D241, E283, and D310 each coordinate Mg(2+). Residues K335, R364, S365, and K386 each contribute to the (2R)-2-phosphoglycerate site. The active-site Proton acceptor is the K335.

This sequence belongs to the enolase family. Mg(2+) is required as a cofactor.

It is found in the cytoplasm. It localises to the secreted. Its subcellular location is the cell surface. The catalysed reaction is (2R)-2-phosphoglycerate = phosphoenolpyruvate + H2O. Its pathway is carbohydrate degradation; glycolysis; pyruvate from D-glyceraldehyde 3-phosphate: step 4/5. Its function is as follows. Catalyzes the reversible conversion of 2-phosphoglycerate (2-PG) into phosphoenolpyruvate (PEP). It is essential for the degradation of carbohydrates via glycolysis. The polypeptide is Enolase (Mycolicibacterium smegmatis (strain ATCC 700084 / mc(2)155) (Mycobacterium smegmatis)).